The chain runs to 120 residues: Large ribosomal subunit protein bL12 (120 aa).

Belongs to the bacterial ribosomal protein bL12 family. In terms of assembly, homodimer. Part of the ribosomal stalk of the 50S ribosomal subunit. Forms a multimeric L10(L12)X complex, where L10 forms an elongated spine to which 2 to 4 L12 dimers bind in a sequential fashion. Binds GTP-bound translation factors.

In terms of biological role, forms part of the ribosomal stalk which helps the ribosome interact with GTP-bound translation factors. Is thus essential for accurate translation. The protein is Large ribosomal subunit protein bL12 of Pseudoalteromonas translucida (strain TAC 125).